The chain runs to 350 residues: F(420)H(2) dehydrogenase subunit H (350 aa).

The next 8 membrane-spanning stretches (helical) occupy residues 21–41, 94–114, 128–148, 173–193, 200–220, 261–281, 288–308, and 330–350; these read GTVG…AVWI, VFML…AVFI, ISIL…FMAA, PLGI…IIDI, FVWN…ALMA, ILGS…PAFV, GLIA…MTII, and LLPL…YLGA.

It belongs to the complex I subunit 1 family. In terms of assembly, the FPO complex is composed of at least 13 different subunits. FpoA, FpoH, FpoJ, FpoK, FpoL, FpoM and FpoN proteins constitute the membrane sector of the complex.

Its subcellular location is the cell membrane. The catalysed reaction is methanophenazine + reduced coenzyme F420-(gamma-L-Glu)(n) = dihydromethanophenazine + oxidized coenzyme F420-(gamma-L-Glu)(n) + H(+). In terms of biological role, component of the F(420)H(2) dehydrogenase (FPO complex) which is part of the energy-conserving F(420)H(2):heterodisulfide oxidoreductase system. The membrane-bound electron transfer system of the complex plays an important role in the metabolism of methylotrophic methanogens when the organisms grow on methanol or methylamines. Catalyzes the oxidation of methanophenazine to dihydromethanophenazine. It shuttles electrons from F(420)H(2), via FAD and iron-sulfur (Fe-S) centers, to methanophenazine (an electron carrier in the membrane). It couples the redox reaction to proton translocation (for every two electrons transferred, two hydrogen ions are translocated across the cytoplasmic membrane), and thus conserves the redox energy in a proton gradient. It also catalyzes the oxidation of F(420)H(2) with quinones such as 2,3-dimethyl-1,4-naphthoquinone, 2-methyl-1,4-naphthoquinone and tetramethyl-p-benzoquinone. The protein is F(420)H(2) dehydrogenase subunit H of Methanosarcina mazei (strain ATCC BAA-159 / DSM 3647 / Goe1 / Go1 / JCM 11833 / OCM 88) (Methanosarcina frisia).